We begin with the raw amino-acid sequence, 119 residues long: Large ribosomal subunit protein uL22 (119 aa).

The protein belongs to the universal ribosomal protein uL22 family. Part of the 50S ribosomal subunit.

Functionally, this protein binds specifically to 23S rRNA; its binding is stimulated by other ribosomal proteins, e.g. L4, L17, and L20. It is important during the early stages of 50S assembly. It makes multiple contacts with different domains of the 23S rRNA in the assembled 50S subunit and ribosome. Its function is as follows. The globular domain of the protein is located near the polypeptide exit tunnel on the outside of the subunit, while an extended beta-hairpin is found that lines the wall of the exit tunnel in the center of the 70S ribosome. This is Large ribosomal subunit protein uL22 from Rhodopirellula baltica (strain DSM 10527 / NCIMB 13988 / SH1).